A 121-amino-acid chain; its full sequence is Large ribosomal subunit protein uL14 (121 aa).

It belongs to the universal ribosomal protein uL14 family. In terms of assembly, part of the 50S ribosomal subunit. Forms a cluster with proteins L3 and L19. In the 70S ribosome, L14 and L19 interact and together make contacts with the 16S rRNA in bridges B5 and B8.

In terms of biological role, binds to 23S rRNA. Forms part of two intersubunit bridges in the 70S ribosome. This Aquifex aeolicus (strain VF5) protein is Large ribosomal subunit protein uL14.